Consider the following 186-residue polypeptide: uncharacterized protein (186 aa).

Positions 1-18 are cleaved as a signal peptide; that stretch reads MKKFFFAAALVVSGLLVG. Cysteine 19 is lipidated: N-palmitoyl cysteine. The S-diacylglycerol cysteine moiety is linked to residue cysteine 19.

The protein resides in the cell membrane. This is an uncharacterized protein from Salmonella typhimurium (strain LT2 / SGSC1412 / ATCC 700720).